The sequence spans 587 residues: Glutamine--tRNA ligase (587 aa).

Residues 58 to 68 carry the 'HIGH' region motif; sequence PEPNGYLHIGH. ATP-binding positions include 59 to 61 and 65 to 71; these read EPN and HIGHAKS. L-glutamine contacts are provided by D91 and Y240. Residues T259 and 294–295 contribute to the ATP site; that span reads RL. A 'KMSKS' region motif is present at residues 301–305; sequence VTSKR.

Belongs to the class-I aminoacyl-tRNA synthetase family. As to quaternary structure, monomer.

The protein localises to the cytoplasm. The catalysed reaction is tRNA(Gln) + L-glutamine + ATP = L-glutaminyl-tRNA(Gln) + AMP + diphosphate. This Bordetella pertussis (strain Tohama I / ATCC BAA-589 / NCTC 13251) protein is Glutamine--tRNA ligase.